A 587-amino-acid polypeptide reads, in one-letter code: Phosphomethylpyrimidine synthase (587 aa).

Residues N218, M247, Y276, H312, 332–334, 373–376, and E412 contribute to the substrate site; these read SRG and DGLR. H416 contacts Zn(2+). Y439 serves as a coordination point for substrate. H480 is a Zn(2+) binding site. [4Fe-4S] cluster is bound by residues C560, C563, and C568.

Belongs to the ThiC family. It depends on [4Fe-4S] cluster as a cofactor.

It catalyses the reaction 5-amino-1-(5-phospho-beta-D-ribosyl)imidazole + S-adenosyl-L-methionine = 4-amino-2-methyl-5-(phosphooxymethyl)pyrimidine + CO + 5'-deoxyadenosine + formate + L-methionine + 3 H(+). The protein operates within cofactor biosynthesis; thiamine diphosphate biosynthesis. In terms of biological role, catalyzes the synthesis of the hydroxymethylpyrimidine phosphate (HMP-P) moiety of thiamine from aminoimidazole ribotide (AIR) in a radical S-adenosyl-L-methionine (SAM)-dependent reaction. The protein is Phosphomethylpyrimidine synthase of Porphyromonas gingivalis (strain ATCC 33277 / DSM 20709 / CIP 103683 / JCM 12257 / NCTC 11834 / 2561).